Consider the following 279-residue polypeptide: Bifunctional protein FolD (279 aa).

Residues 164–166 (GRS), Ser189, and Ile230 contribute to the NADP(+) site.

Belongs to the tetrahydrofolate dehydrogenase/cyclohydrolase family. Homodimer.

It carries out the reaction (6R)-5,10-methylene-5,6,7,8-tetrahydrofolate + NADP(+) = (6R)-5,10-methenyltetrahydrofolate + NADPH. The enzyme catalyses (6R)-5,10-methenyltetrahydrofolate + H2O = (6R)-10-formyltetrahydrofolate + H(+). The protein operates within one-carbon metabolism; tetrahydrofolate interconversion. Functionally, catalyzes the oxidation of 5,10-methylenetetrahydrofolate to 5,10-methenyltetrahydrofolate and then the hydrolysis of 5,10-methenyltetrahydrofolate to 10-formyltetrahydrofolate. This is Bifunctional protein FolD from Agathobacter rectalis (strain ATCC 33656 / DSM 3377 / JCM 17463 / KCTC 5835 / VPI 0990) (Eubacterium rectale).